A 658-amino-acid polypeptide reads, in one-letter code: UvrABC system protein B (658 aa).

Residues 26–413 (EGINSGKKKQ…SPEVIEQIIR (388 aa)) enclose the Helicase ATP-binding domain. Position 39 to 46 (39 to 46 (GATGTGKT)) interacts with ATP. The Beta-hairpin signature appears at 92–115 (YYDYYQPEAYVPQTDTFIEKDAQI). One can recognise a Helicase C-terminal domain in the interval 430–596 (QIDDLLGEIQ…TIQKGVRDVI (167 aa)). One can recognise a UVR domain in the interval 622 to 657 (EKTIAKMEAEMKEAAKALDFERAAELRDLLLELKAE).

It belongs to the UvrB family. Forms a heterotetramer with UvrA during the search for lesions. Interacts with UvrC in an incision complex.

Its subcellular location is the cytoplasm. Its function is as follows. The UvrABC repair system catalyzes the recognition and processing of DNA lesions. A damage recognition complex composed of 2 UvrA and 2 UvrB subunits scans DNA for abnormalities. Upon binding of the UvrA(2)B(2) complex to a putative damaged site, the DNA wraps around one UvrB monomer. DNA wrap is dependent on ATP binding by UvrB and probably causes local melting of the DNA helix, facilitating insertion of UvrB beta-hairpin between the DNA strands. Then UvrB probes one DNA strand for the presence of a lesion. If a lesion is found the UvrA subunits dissociate and the UvrB-DNA preincision complex is formed. This complex is subsequently bound by UvrC and the second UvrB is released. If no lesion is found, the DNA wraps around the other UvrB subunit that will check the other stand for damage. This Bacillus cereus (strain ZK / E33L) protein is UvrABC system protein B.